Consider the following 476-residue polypeptide: Neuropeptide-like precursor 1 (476 aa).

The first 34 residues, 1 to 34, serve as a signal peptide directing secretion; that stretch reads MNDAGASIGRHRGCLLLFVALAVAFSSYVEQVES. Valine 133 carries the post-translational modification Valine amide. 2 consecutive propeptides follow at residues 160-232 and 259-476; these read DEAT…NSYF and YVMP…RKNQ. Disordered regions lie at residues 275–298 and 360–385; these read QNDI…DGEV and PEVE…SHPT. The span at 286–297 shows a compositional bias: acidic residues; that stretch reads DDDDDDDDDDGE.

In terms of tissue distribution, neuropeptide-like precursor 1-1: Expressed in antennal lobe (AL), corpora cardiaca (CC), corpora allata (CA) and gnathal ganglion (GNG) (at protein level). Expression in AL detected in all animals, in GNG in most animals, expression in CC and CA in few animals (at protein level). Neuropeptide-like precursor 1-2: Expressed in antennal lobe (AL), corpora cardiaca (CC), corpora allata (CA) and gnathal ganglion (GNG) (at protein level). Expression in AL detected in all animals, in GNG in some animals, expression in CC and CA in few animals (at protein level). Neuropeptide-like precursor 1-3: Not expressed in antennal lobe (AL), corpora cardiaca (CC), corpora allata (CA) and gnathal ganglion (GNG) (at protein level). Neuropeptide-like precursor 1-4: Expressed in antennal lobe (AL) and gnathal ganglion (GNG) (at protein level). Expression in AL detected in most animals, in GNG in some animals (at protein level). Not expressed in CC and CA (at protein level). YRVamide: Expressed in antennal lobe (AL), corpora cardiaca (CC), corpora allata (CA) and gnathal ganglion (GNG) (at protein level). Expression in AL and GNG detected in most animals, expression in CC and CA in few animals (at protein level). Extended YRVamide: Expressed in antennal lobe (AL) and gnathal ganglion (GNG) (at protein level). Expression in AL detected in most animals, in GNG in some animals (at protein level). Not expressed in corpora cardiaca (CC) and corpora allata (CA) (at protein level). Neuropeptide-like precursor 1-6: Expressed in antennal lobe (AL), corpora cardiaca (CC), corpora allata (CA) and gnathal ganglion (GNG) (at protein level). Expression in GNG detected in all animals, expression in AL in most animals, in CC and CA in few animals (at protein level). Neuropeptide-like precursor 1-6(1-11): Expressed in antennal lobe (AL) and gnathal ganglion (GNG) in most animals (at protein level). Not expressed in corpora cardiaca (CC) and corpora allata (CA) (at protein level). Neuropeptide-like precursor 1-9: Expressed in antennal lobe (AL) and gnathal ganglion (GNG) (at protein level). Expression in AL detected in all animals in GNG in most (at protein level). Not expressed in corpora cardiaca (CC) and corpora allata (CA) (at protein level).

The protein resides in the secreted. The polypeptide is Neuropeptide-like precursor 1 (Agrotis ipsilon (Black cutworm moth)).